A 320-amino-acid polypeptide reads, in one-letter code: MEEKYLILSIESSCDETSLALFENNKLIAHKISSSASAQAFHGGVVPELASRYHEHNINRLFVDILNETKIDPLTITHVAYTAMPGLPGCLHVGKVFAKQLASLINAELVPINHLHAHVFSASIDQELVFPFLGLVVSGGESCLYLVSDYDQIKILNQTQDDAIGECYDKVARILGWNYPGGPIIDKNYQEDLATLEFIKSQPAAKNFSFSGLKTAVINYVHNSKQKKLDFDPIVIASSFQKFAINEVIKKVKYYLDLYQLKRLAIGGGVSANSLLRKKIRDLNVISYIPQMIYTGDNAAMIGAYAYALIKNHKKSILIK.

Positions 114 and 118 each coordinate Fe cation. Residues 136-140 (VVSGG), Asp169, Gly182, Asp186, and Asn273 contribute to the substrate site. A Fe cation-binding site is contributed by Asp297.

This sequence belongs to the KAE1 / TsaD family. Fe(2+) is required as a cofactor.

The protein resides in the cytoplasm. The catalysed reaction is L-threonylcarbamoyladenylate + adenosine(37) in tRNA = N(6)-L-threonylcarbamoyladenosine(37) in tRNA + AMP + H(+). Functionally, required for the formation of a threonylcarbamoyl group on adenosine at position 37 (t(6)A37) in tRNAs that read codons beginning with adenine. Is involved in the transfer of the threonylcarbamoyl moiety of threonylcarbamoyl-AMP (TC-AMP) to the N6 group of A37, together with TsaE and TsaB. TsaD likely plays a direct catalytic role in this reaction. The chain is tRNA N6-adenosine threonylcarbamoyltransferase from Ureaplasma urealyticum serovar 10 (strain ATCC 33699 / Western).